The sequence spans 162 residues: NADH-quinone oxidoreductase subunit I (162 aa).

2 4Fe-4S ferredoxin-type domains span residues R54–E83 and T93–I122. 8 residues coordinate [4Fe-4S] cluster: C63, C66, C69, C73, C102, C105, C108, and C112.

It belongs to the complex I 23 kDa subunit family. In terms of assembly, NDH-1 is composed of 14 different subunits. Subunits NuoA, H, J, K, L, M, N constitute the membrane sector of the complex. [4Fe-4S] cluster is required as a cofactor.

It is found in the cell inner membrane. It catalyses the reaction a quinone + NADH + 5 H(+)(in) = a quinol + NAD(+) + 4 H(+)(out). Its function is as follows. NDH-1 shuttles electrons from NADH, via FMN and iron-sulfur (Fe-S) centers, to quinones in the respiratory chain. The immediate electron acceptor for the enzyme in this species is believed to be ubiquinone. Couples the redox reaction to proton translocation (for every two electrons transferred, four hydrogen ions are translocated across the cytoplasmic membrane), and thus conserves the redox energy in a proton gradient. The chain is NADH-quinone oxidoreductase subunit I from Burkholderia vietnamiensis (strain G4 / LMG 22486) (Burkholderia cepacia (strain R1808)).